The chain runs to 535 residues: CTP synthase (535 aa).

The tract at residues 1 to 267 (MTKYIFVTGG…DQIVCDHLKL (267 aa)) is amidoligase domain. Position 13 (Ser-13) interacts with CTP. UTP is bound at residue Ser-13. 14 to 19 (SLGKGI) lines the ATP pocket. Residue Tyr-54 participates in L-glutamine binding. Residue Asp-71 participates in ATP binding. Asp-71 and Glu-141 together coordinate Mg(2+). CTP is bound by residues 148–150 (DIE), 188–193 (KTKPTQ), and Lys-224. UTP contacts are provided by residues 188–193 (KTKPTQ) and Lys-224. Position 240–242 (240–242 (RDA)) interacts with ATP. Residues 292–534 (KIALVGKYVE…VKASITNKES (243 aa)) form the Glutamine amidotransferase type-1 domain. Gly-354 provides a ligand contact to L-glutamine. The active-site Nucleophile; for glutamine hydrolysis is the Cys-381. Residues 382 to 385 (LGMQ), Glu-405, and Arg-462 each bind L-glutamine. Residues His-507 and Glu-509 contribute to the active site.

It belongs to the CTP synthase family. As to quaternary structure, homotetramer.

The enzyme catalyses UTP + L-glutamine + ATP + H2O = CTP + L-glutamate + ADP + phosphate + 2 H(+). It catalyses the reaction L-glutamine + H2O = L-glutamate + NH4(+). It carries out the reaction UTP + NH4(+) + ATP = CTP + ADP + phosphate + 2 H(+). The protein operates within pyrimidine metabolism; CTP biosynthesis via de novo pathway; CTP from UDP: step 2/2. Allosterically activated by GTP, when glutamine is the substrate; GTP has no effect on the reaction when ammonia is the substrate. The allosteric effector GTP functions by stabilizing the protein conformation that binds the tetrahedral intermediate(s) formed during glutamine hydrolysis. Inhibited by the product CTP, via allosteric rather than competitive inhibition. Functionally, catalyzes the ATP-dependent amination of UTP to CTP with either L-glutamine or ammonia as the source of nitrogen. Regulates intracellular CTP levels through interactions with the four ribonucleotide triphosphates. This Bacillus thuringiensis subsp. konkukian (strain 97-27) protein is CTP synthase.